Reading from the N-terminus, the 503-residue chain is Cytochrome P450 71B6 (503 aa).

Residues 10–30 (TELLPWLLLLLIPPLLIFFLL) form a helical membrane-spanning segment. Cys-446 lines the heme pocket.

Belongs to the cytochrome P450 family. Heme is required as a cofactor.

It localises to the membrane. The protein is Cytochrome P450 71B6 (CYP71B6) of Arabidopsis thaliana (Mouse-ear cress).